A 248-amino-acid chain; its full sequence is DNA repair protein RecO (248 aa).

It belongs to the RecO family.

Involved in DNA repair and RecF pathway recombination. This Bradyrhizobium sp. (strain ORS 278) protein is DNA repair protein RecO.